The chain runs to 181 residues: Putative adenylate kinase (181 aa).

ATP contacts are provided by G10, G12, K13, S14, and T15. Positions 35 to 58 (NITEVVSKNGLYLEKDIEMDSYVV) are NMP. An LID region spans residues 106-116 (SRNYSSEKVKE). Residues R107 and K147 each contribute to the ATP site.

The protein belongs to the adenylate kinase family. AK6 subfamily. Interacts with uS11. Not a structural component of 40S pre-ribosomes, but transiently interacts with them by binding to uS11.

It catalyses the reaction AMP + ATP = 2 ADP. The enzyme catalyses ATP + H2O = ADP + phosphate + H(+). Its function is as follows. Broad-specificity nucleoside monophosphate (NMP) kinase that catalyzes the reversible transfer of the terminal phosphate group between nucleoside triphosphates and monophosphates. Also has ATPase activity. Involved in the late maturation steps of the 30S ribosomal particles, specifically 16S rRNA maturation. While NMP activity is not required for ribosome maturation, ATPase activity is. Associates transiently with small ribosomal subunit protein uS11. ATP hydrolysis breaks the interaction with uS11. May temporarily remove uS11 from the ribosome to enable a conformational change of the ribosomal RNA that is needed for the final maturation step of the small ribosomal subunit. The polypeptide is Putative adenylate kinase (Methanococcus maripaludis (strain C7 / ATCC BAA-1331)).